Reading from the N-terminus, the 300-residue chain is uncharacterized protein (300 aa).

One can recognise an HTH lysR-type domain in the interval 10 to 67; the sequence is FDLNLLVIFECIYQHLSISKAAESLYITPSAVSQSLQRLRAQFNDPLFIRSGKGIAPT. The segment at residues 27–46 is a DNA-binding region (H-T-H motif); that stretch reads ISKAAESLYITPSAVSQSLQ.

The protein belongs to the LysR transcriptional regulatory family.

This is an uncharacterized protein from Escherichia coli (strain K12).